Reading from the N-terminus, the 1102-residue chain is MVLLNRRKIQPKEIGQSADSFSETPWVIKESSERINDYDSDLKKLDFYKRDIFTCEISGKDGLSYFKALKSEEQHREKVRYLLPKELRKAIANFANFSPIRKVGHLVESAFQRFSNRFFIGDTVCLKTIQKNALITYKEGEPNLVESPTIENNVTLFLVKDVFQSNGMMESEKGEISAPKLSLYLITECLNRESKGAALIVGQNEIKRPESHFSKFIIACFLNEILIKVSNKEHAPWRVKQEYIERYDVNPKCSPNMIDYLPDRMNSSSSELYTPLTIPPESDVEPADWKETSETSETSETSLSKIKAIDDEISVSFDHIYDNVNSLAYNDLKGTVDDKELPFTGPSIPFENISYLDSSLEYKNIDQKWFKECSQFPTERLLVVYQFLSFFGRFIGLSHFNFDQFLTTIKCTSPEALVDEYVKINFLKTYNSKGSFTNEKPRNEIYNQVTSSNVSQREKANVFNADESQRIPSNFTRNQKMRKFITDKSTEFVMYSIFKGKPLKNDDMEFQSYEKVNILYIDIVCSLMCLMTDNEPDWNCNLMDNWTEEKRKEEGNKTEIDIAIEKCLNYGDTSWVKLLHNKNFSNGNWLICLLGILQQNTHMIAYSDVAKCITKKILPLSMNFVNLGDELWDNFRKRLSIKDKIDVLWVLVDFASNFSSYIKELVDKVPKLCNGIRLKLDSAKKEYIKLKRQLKTLTKNRVKLHSNVSMNRYGSDECKGKVNALKVKIAYLMEDIAFLEAKLIQSDIKRLEILGKDRNGNRYYWMDSNGSSSAISEKNEELYNCCFLWVQGPSEADINFCLDVDVESLKKWELLAKAKGTAYATKEVFSIFRSTDGSYYQIAQGENFMIINSNGILMRPTIPAFIDKKIISETPEKLLLSHHQWAFFNDIEDIHMLVDRLDDLRENEGQLKKALTSKMDRIEVSYKQQFKIKRRIECDETFKKNHKLLKNNEFTFPELKRIETTCTSNGQHFSNMEKISKKLSRTKNDLVLEAILKDVAHLGECERALLKKQQNLIYPLNFHFEQLRTIDLEFIVETKRKRQEDILTKLLNHQRYKHISHVSGYGISSQRVDKAAHLDVQGILEEIECQLISRRREDEERN.

Residues 23–131 (ETPWVIKESS…DTVCLKTIQK (109 aa)) enclose the WAC domain. Residues 271–301 (ELYTPLTIPPESDVEPADWKETSETSETSET) are disordered. One can recognise a DDT domain in the interval 375–435 (QFPTERLLVV…FLKTYNSKGS (61 aa)). Positions 673–743 (CNGIRLKLDS…EDIAFLEAKL (71 aa)) form a coiled coil.

The protein resides in the nucleus. May be required for the activity of an ISWI chromatin-remodeling complex. This is Putative ISWI chromatin-remodeling complex subunit YPL216W from Saccharomyces cerevisiae (strain ATCC 204508 / S288c) (Baker's yeast).